A 95-amino-acid chain; its full sequence is Aspartyl/glutamyl-tRNA(Asn/Gln) amidotransferase subunit C (95 aa).

It belongs to the GatC family. Heterotrimer of A, B and C subunits.

It carries out the reaction L-glutamyl-tRNA(Gln) + L-glutamine + ATP + H2O = L-glutaminyl-tRNA(Gln) + L-glutamate + ADP + phosphate + H(+). It catalyses the reaction L-aspartyl-tRNA(Asn) + L-glutamine + ATP + H2O = L-asparaginyl-tRNA(Asn) + L-glutamate + ADP + phosphate + 2 H(+). In terms of biological role, allows the formation of correctly charged Asn-tRNA(Asn) or Gln-tRNA(Gln) through the transamidation of misacylated Asp-tRNA(Asn) or Glu-tRNA(Gln) in organisms which lack either or both of asparaginyl-tRNA or glutaminyl-tRNA synthetases. The reaction takes place in the presence of glutamine and ATP through an activated phospho-Asp-tRNA(Asn) or phospho-Glu-tRNA(Gln). This chain is Aspartyl/glutamyl-tRNA(Asn/Gln) amidotransferase subunit C, found in Pseudomonas entomophila (strain L48).